The primary structure comprises 1174 residues: DNA-directed RNA polymerase subunit beta (1174 aa).

This sequence belongs to the RNA polymerase beta chain family. The RNAP catalytic core consists of 2 alpha, 1 beta, 1 beta' and 1 omega subunit. When a sigma factor is associated with the core the holoenzyme is formed, which can initiate transcription.

The enzyme catalyses RNA(n) + a ribonucleoside 5'-triphosphate = RNA(n+1) + diphosphate. Its function is as follows. DNA-dependent RNA polymerase catalyzes the transcription of DNA into RNA using the four ribonucleoside triphosphates as substrates. This Mycolicibacterium gilvum (strain PYR-GCK) (Mycobacterium gilvum (strain PYR-GCK)) protein is DNA-directed RNA polymerase subunit beta.